A 274-amino-acid chain; its full sequence is Dehydration-responsive element-binding protein 2A (274 aa).

Composition is skewed to basic and acidic residues over residues 1-10 and 35-50; these read MERGEGRRGD and KWWK…ENSS. The tract at residues 1-75 is disordered; the sequence is MERGEGRRGD…KGGPENSNCA (75 aa). The segment at residues 75-132 is a DNA-binding region (AP2/ERF); sequence AYRGVRQRTWGKWVAEIREPNRGRRLWLGSFPTALEAAHAYDEAARAMYGPTARVNFA.

Belongs to the AP2/ERF transcription factor family. ERF subfamily.

The protein resides in the nucleus. Its function is as follows. Transcriptional activator that binds specifically to the DNA sequence 5'-[AG]CCGAC-3' of the cis-acting dehydration-responsive element (DRE). Binding to the C-repeat/DRE element mediates high salinity- and dehydration-inducible transcription. The protein is Dehydration-responsive element-binding protein 2A (DREB2A) of Oryza sativa subsp. japonica (Rice).